Here is a 122-residue protein sequence, read N- to C-terminus: Large ribosomal subunit protein uL14 (122 aa).

Belongs to the universal ribosomal protein uL14 family. As to quaternary structure, part of the 50S ribosomal subunit. Forms a cluster with proteins L3 and L19. In the 70S ribosome, L14 and L19 interact and together make contacts with the 16S rRNA in bridges B5 and B8.

In terms of biological role, binds to 23S rRNA. Forms part of two intersubunit bridges in the 70S ribosome. The protein is Large ribosomal subunit protein uL14 of Micrococcus luteus (strain ATCC 4698 / DSM 20030 / JCM 1464 / CCM 169 / CCUG 5858 / IAM 1056 / NBRC 3333 / NCIMB 9278 / NCTC 2665 / VKM Ac-2230) (Micrococcus lysodeikticus).